The sequence spans 209 residues: Dehydration-responsive element-binding protein 1F (209 aa).

The short motif at 14 to 26 is the Nuclear localization signal element; it reads KKRAGRRVFKETR. The AP2/ERF DNA-binding region spans 29-86; the sequence is VYRGIRRRNGDKWVCEVREPTHQRRIWLGTYPTADMAARAHDVAVLALRGRSACLNFA. Residues 137–157 are disordered; the sequence is FGSGSGSGSGSEERNSSSYGF.

Belongs to the AP2/ERF transcription factor family. ERF subfamily.

It localises to the nucleus. Functionally, transcriptional activator that binds specifically to the DNA sequence 5'-[AG]CCGAC-3'. Binding to the C-repeat/DRE element mediates cold or dehydration-inducible transcription. CBF/DREB1 factors play a key role in freezing tolerance and cold acclimation. In Arabidopsis thaliana (Mouse-ear cress), this protein is Dehydration-responsive element-binding protein 1F (DREB1F).